The following is a 317-amino-acid chain: MKVLWAALLVTFLAGCQAKVEQPVESEPEPELRQQTEWQSGQPWELALGRFWDYLRWVQTLSEQVQEELLSSQVTQELTTLMDETMKELKAYKSDLEEQLSPVAEETRARLSKELQAAQARLGADMEDVRSRLVQYRGEVQAMLGQSTEELRARLASHLRKLRKRLLRDADDLQKRLAVYQAGAREGAERGVSAIRERLGPLVEQGRVRAATVGSLAGQPLQERAQAWGERLRARMEEVGSRTRDRLDEVKEQVAEVRAKLEEQAQQISLQAEAFQARLKSWFEPLVEDMQRQWAGLVEKVQAAVGASTAPVPSDNH.

An N-terminal signal peptide occupies residues 1 to 18; the sequence is MKVLWAALLVTFLAGCQA. 8 repeat units span residues 80–101, 102–123, 124–145, 146–167, 168–189, 190–211, 212–233, and 234–255. Residues 80 to 255 are 8 X 22 AA approximate tandem repeats; the sequence is TLMDETMKEL…RLDEVKEQVA (176 aa). Met143 carries the methionine sulfoxide modification. Ser147 is modified (phosphoserine). The tract at residues 158–168 is LDL and other lipoprotein receptors binding; that stretch reads HLRKLRKRLLR. 162–165 serves as a coordination point for heparin; it reads LRKR. Positions 210–290 are lipid-binding and lipoprotein association; it reads AATVGSLAGQ…SWFEPLVEDM (81 aa). Residue 229 to 236 participates in heparin binding; sequence GERLRARM. The homooligomerization stretch occupies residues 266-317; the sequence is QQISLQAEAFQARLKSWFEPLVEDMQRQWAGLVEKVQAAVGASTAPVPSDNH. A specificity for association with VLDL region spans residues 278 to 290; the sequence is RLKSWFEPLVEDM.

This sequence belongs to the apolipoprotein A1/A4/E family. Homotetramer. May interact with ABCA1; functionally associated with ABCA1 in the biogenesis of HDLs. May interact with APP/A4 amyloid-beta peptide; the interaction is extremely stable in vitro but its physiological significance is unclear. May interact with MAPT. May interact with MAP2. In the cerebrospinal fluid, interacts with secreted SORL1. Interacts with PMEL; this allows the loading of PMEL luminal fragment on ILVs to induce fibril nucleation. In terms of processing, APOE exists as multiple glycosylated and sialylated glycoforms within cells and in plasma. The extent of glycosylation and sialylation are tissue and context specific. Glycated in plasma VLDL. Post-translationally, phosphorylated by FAM20C in the extracellular medium.

Its subcellular location is the secreted. The protein resides in the extracellular space. The protein localises to the extracellular matrix. It localises to the extracellular vesicle. It is found in the endosome. Its subcellular location is the multivesicular body. APOE is an apolipoprotein, a protein associating with lipid particles, that mainly functions in lipoprotein-mediated lipid transport between organs via the plasma and interstitial fluids. APOE is a core component of plasma lipoproteins and is involved in their production, conversion and clearance. Apolipoproteins are amphipathic molecules that interact both with lipids of the lipoprotein particle core and the aqueous environment of the plasma. As such, APOE associates with chylomicrons, chylomicron remnants, very low density lipoproteins (VLDL) and intermediate density lipoproteins (IDL) but shows a preferential binding to high-density lipoproteins (HDL). It also binds a wide range of cellular receptors including the LDL receptor/LDLR, the LDL receptor-related proteins LRP1, LRP2 and LRP8 and the very low-density lipoprotein receptor/VLDLR that mediate the cellular uptake of the APOE-containing lipoprotein particles. Finally, APOE also has a heparin-binding activity and binds heparan-sulfate proteoglycans on the surface of cells, a property that supports the capture and the receptor-mediated uptake of APOE-containing lipoproteins by cells. A main function of APOE is to mediate lipoprotein clearance through the uptake of chylomicrons, VLDLs, and HDLs by hepatocytes. APOE is also involved in the biosynthesis by the liver of VLDLs as well as their uptake by peripheral tissues ensuring the delivery of triglycerides and energy storage in muscle, heart and adipose tissues. By participating in the lipoprotein-mediated distribution of lipids among tissues, APOE plays a critical role in plasma and tissues lipid homeostasis. APOE is also involved in two steps of reverse cholesterol transport, the HDLs-mediated transport of cholesterol from peripheral tissues to the liver, and thereby plays an important role in cholesterol homeostasis. First, it is functionally associated with ABCA1 in the biogenesis of HDLs in tissues. Second, it is enriched in circulating HDLs and mediates their uptake by hepatocytes. APOE also plays an important role in lipid transport in the central nervous system, regulating neuron survival and sprouting. This Colobus guereza (Mantled guereza) protein is Apolipoprotein E (APOE).